Consider the following 129-residue polypeptide: Large ribosomal subunit protein eL32 (129 aa).

The protein belongs to the eukaryotic ribosomal protein eL32 family.

In Methanosarcina acetivorans (strain ATCC 35395 / DSM 2834 / JCM 12185 / C2A), this protein is Large ribosomal subunit protein eL32 (rpl32e).